A 338-amino-acid polypeptide reads, in one-letter code: Glycerol-3-phosphate dehydrogenase [NAD(P)+] 1 (338 aa).

NADPH is bound by residues S11, W12, H32, R33, and K109. Positions 109, 140, and 142 each coordinate sn-glycerol 3-phosphate. Position 144 (A144) interacts with NADPH. K195, D248, S258, R259, and N260 together coordinate sn-glycerol 3-phosphate. K195 (proton acceptor) is an active-site residue. R259 is an NADPH binding site. NADPH-binding residues include V283 and E285.

This sequence belongs to the NAD-dependent glycerol-3-phosphate dehydrogenase family.

The protein localises to the cytoplasm. It carries out the reaction sn-glycerol 3-phosphate + NAD(+) = dihydroxyacetone phosphate + NADH + H(+). The catalysed reaction is sn-glycerol 3-phosphate + NADP(+) = dihydroxyacetone phosphate + NADPH + H(+). It functions in the pathway membrane lipid metabolism; glycerophospholipid metabolism. Catalyzes the reduction of the glycolytic intermediate dihydroxyacetone phosphate (DHAP) to sn-glycerol 3-phosphate (G3P), the key precursor for phospholipid synthesis. This Lactobacillus delbrueckii subsp. bulgaricus (strain ATCC 11842 / DSM 20081 / BCRC 10696 / JCM 1002 / NBRC 13953 / NCIMB 11778 / NCTC 12712 / WDCM 00102 / Lb 14) protein is Glycerol-3-phosphate dehydrogenase [NAD(P)+] 1.